Consider the following 367-residue polypeptide: Phosphoribosylaminoimidazole-succinocarboxamide synthase (367 aa).

Belongs to the SAICAR synthetase family.

The enzyme catalyses 5-amino-1-(5-phospho-D-ribosyl)imidazole-4-carboxylate + L-aspartate + ATP = (2S)-2-[5-amino-1-(5-phospho-beta-D-ribosyl)imidazole-4-carboxamido]succinate + ADP + phosphate + 2 H(+). It participates in purine metabolism; IMP biosynthesis via de novo pathway; 5-amino-1-(5-phospho-D-ribosyl)imidazole-4-carboxamide from 5-amino-1-(5-phospho-D-ribosyl)imidazole-4-carboxylate: step 1/2. This is Phosphoribosylaminoimidazole-succinocarboxamide synthase from Shewanella pealeana (strain ATCC 700345 / ANG-SQ1).